Reading from the N-terminus, the 453-residue chain is Ribosomal protein uS12 methylthiotransferase RimO (453 aa).

In terms of domain architecture, MTTase N-terminal spans 5–120 (PKVGFVSLGC…VMQAVHSHLP (116 aa)). [4Fe-4S] cluster-binding residues include C14, C50, C79, C151, C155, and C158. The region spanning 137–382 (LTPRHYAYLK…MEVAEEVSAN (246 aa)) is the Radical SAM core domain. One can recognise a TRAM domain in the interval 385-453 (QRKVGKTLKV…ADGHDLWGEV (69 aa)).

This sequence belongs to the methylthiotransferase family. RimO subfamily. Requires [4Fe-4S] cluster as cofactor.

It localises to the cytoplasm. It carries out the reaction L-aspartate(89)-[ribosomal protein uS12]-hydrogen + (sulfur carrier)-SH + AH2 + 2 S-adenosyl-L-methionine = 3-methylsulfanyl-L-aspartate(89)-[ribosomal protein uS12]-hydrogen + (sulfur carrier)-H + 5'-deoxyadenosine + L-methionine + A + S-adenosyl-L-homocysteine + 2 H(+). Its function is as follows. Catalyzes the methylthiolation of an aspartic acid residue of ribosomal protein uS12. The chain is Ribosomal protein uS12 methylthiotransferase RimO from Burkholderia cenocepacia (strain HI2424).